Consider the following 643-residue polypeptide: Threonine--tRNA ligase (643 aa).

Residues 1 to 61 (MIEIFIEDLN…NQSGNLKFLK (61 aa)) form the TGS domain. The interval 246 to 539 (DHRKIGKDLE…LLEHYAGFLP (294 aa)) is catalytic. Residues Cys339, His390, and His516 each contribute to the Zn(2+) site.

Belongs to the class-II aminoacyl-tRNA synthetase family. Homodimer. Requires Zn(2+) as cofactor.

Its subcellular location is the cytoplasm. The enzyme catalyses tRNA(Thr) + L-threonine + ATP = L-threonyl-tRNA(Thr) + AMP + diphosphate + H(+). Its function is as follows. Catalyzes the attachment of threonine to tRNA(Thr) in a two-step reaction: L-threonine is first activated by ATP to form Thr-AMP and then transferred to the acceptor end of tRNA(Thr). Also edits incorrectly charged L-seryl-tRNA(Thr). In Sulfurihydrogenibium sp. (strain YO3AOP1), this protein is Threonine--tRNA ligase.